We begin with the raw amino-acid sequence, 413 residues long: Arginine biosynthesis bifunctional protein ArgJ (413 aa).

Substrate is bound by residues threonine 158, lysine 184, threonine 195, glutamate 285, asparagine 408, and serine 413. Residue threonine 195 is the Nucleophile of the active site.

This sequence belongs to the ArgJ family. In terms of assembly, heterotetramer of two alpha and two beta chains.

It is found in the cytoplasm. The enzyme catalyses N(2)-acetyl-L-ornithine + L-glutamate = N-acetyl-L-glutamate + L-ornithine. The catalysed reaction is L-glutamate + acetyl-CoA = N-acetyl-L-glutamate + CoA + H(+). It participates in amino-acid biosynthesis; L-arginine biosynthesis; L-ornithine and N-acetyl-L-glutamate from L-glutamate and N(2)-acetyl-L-ornithine (cyclic): step 1/1. Its pathway is amino-acid biosynthesis; L-arginine biosynthesis; N(2)-acetyl-L-ornithine from L-glutamate: step 1/4. Its function is as follows. Catalyzes two activities which are involved in the cyclic version of arginine biosynthesis: the synthesis of N-acetylglutamate from glutamate and acetyl-CoA as the acetyl donor, and of ornithine by transacetylation between N(2)-acetylornithine and glutamate. The protein is Arginine biosynthesis bifunctional protein ArgJ of Agrobacterium fabrum (strain C58 / ATCC 33970) (Agrobacterium tumefaciens (strain C58)).